Consider the following 264-residue polypeptide: tRNA (guanine-N(1)-)-methyltransferase (264 aa).

S-adenosyl-L-methionine contacts are provided by residues Gly125 and 145 to 150 (LGDFVL).

It belongs to the RNA methyltransferase TrmD family. In terms of assembly, homodimer.

The protein resides in the cytoplasm. The catalysed reaction is guanosine(37) in tRNA + S-adenosyl-L-methionine = N(1)-methylguanosine(37) in tRNA + S-adenosyl-L-homocysteine + H(+). Functionally, specifically methylates guanosine-37 in various tRNAs. The polypeptide is tRNA (guanine-N(1)-)-methyltransferase (Burkholderia vietnamiensis (strain G4 / LMG 22486) (Burkholderia cepacia (strain R1808))).